A 1724-amino-acid polypeptide reads, in one-letter code: Protein CHROMATIN REMODELING 5 (1724 aa).

Disordered regions lie at residues 24 to 88 (QNAA…QSST) and 104 to 415 (DCQP…DDIE). The span at 25–34 (NAATFQSSPL) shows a compositional bias: polar residues. Residues 126–144 (EAYHSEDNHSNDRSEKLDS) are compositionally biased toward basic and acidic residues. A coiled-coil region spans residues 138–164 (RSEKLDSENENDNENEEEDNEMNKHQS). Acidic residues-rich tracts occupy residues 145 to 157 (ENEN…EEDN), 170 to 186 (PADE…DEDN), 239 to 264 (ADMD…DAAD), and 278 to 297 (VSDE…YEDD). The segment covering 301-313 (KKPKVRQQSKGFR) has biased composition (basic residues). The short motif at 320 to 327 (ERKSFHVS) is the Nuclear localization signal 1 element. Residues 337–350 (QDDDSEEDSENDND) are compositionally biased toward acidic residues. The span at 362–376 (TLRQNNGRSTNTIGQ) shows a compositional bias: polar residues. Residues 403–412 (DGKNRKNQKD) show a composition bias toward basic and acidic residues. The Chromo 1 domain maps to 420–499 (DVIEKVLWHQ…FKKVLNYTKK (80 aa)). A coiled-coil region spans residues 505–525 (RYRTALSREEIEVNDVSKEMD). Positions 533–597 (SQVERIIADR…REVSIAVQGK (65 aa)) constitute a Chromo 2 domain. The 173-residue stretch at 637–809 (VNSWLNDTNV…WALLHFLDPG (173 aa)) folds into the Helicase ATP-binding domain. Position 650–657 (650–657 (DEMGLGKT)) interacts with ATP. The short motif at 760–763 (DEAH) is the DEAH box element. Residues 943–1094 (ILDKLLVRLR…HLVIQKLNAE (152 aa)) enclose the Helicase C-terminal domain. Residues 1126–1163 (KEDKNDEESKKRLLSMDIDEILERAEQVEEKHTDETEH) adopt a coiled-coil conformation. A disordered region spans residues 1199-1245 (ALAPRAARNTKSYVDPSHPDRTSKRKKKGSEPPEHTERSQKRRKTEY). Short sequence motifs (nuclear localization signal) lie at residues 1224–1231 (KKKGSEPP) and 1348–1355 (LKRVQGLQ). The span at 1227-1237 (GSEPPEHTERS) shows a compositional bias: basic and acidic residues. Disordered stretches follow at residues 1480-1524 (QFKA…EMSD) and 1654-1724 (KFKT…FPPR). Residues 1504-1520 (DGPRKTQKAEPLVKEEG) show a composition bias toward basic and acidic residues. Residues 1658–1667 (AGNSQGSQQV) show a composition bias toward polar residues. The segment covering 1669 to 1691 (KGIDTAKFEAWKRRRRTENDVQT) has biased composition (basic and acidic residues). A compositionally biased stretch (polar residues) spans 1692–1702 (ERPTITNSNSL).

This sequence belongs to the SNF2/RAD54 helicase family.

The protein resides in the nucleus. Its function is as follows. DNA-binding helicase that specifically binds to the promoter of target genes, leading to chromatin remodeling, possibly by promoting deposition of histone H3.3. Probable chromatin remodeling factor. This is Protein CHROMATIN REMODELING 5 from Arabidopsis thaliana (Mouse-ear cress).